Here is a 174-residue protein sequence, read N- to C-terminus: U-stichotoxin-Hau2a (174 aa).

Positions 1–18 (MKPIFIVALLFSTCLVNA) are cleaved as a signal peptide. Residues 19-33 (KPSINDADIKREPEP) constitute a propeptide that is removed on maturation. Residue Pro-39 is modified to Hydroxyproline. Intrachain disulfides connect Cys-40-Cys-51 and Cys-43-Cys-58. Positions 61–67 (RKREPEP) are excised as a propeptide. Position 73 is a hydroxyproline (Pro-73). Cystine bridges form between Cys-74–Cys-85 and Cys-77–Cys-92. A propeptide spanning residues 95–101 (RKREPEP) is cleaved from the precursor. Pro-107 carries the hydroxyproline modification. 2 disulfides stabilise this stretch: Cys-108-Cys-119 and Cys-111-Cys-126. A propeptide spanning residues 129–135 (RKREPEP) is cleaved from the precursor. The residue at position 141 (Pro-141) is a Hydroxyproline. Disulfide bonds link Cys-142/Cys-153 and Cys-145/Cys-160. A propeptide spanning residues 163–174 (RKREPENQDLWS) is cleaved from the precursor.

The protein belongs to the sea anemone BBH family.

The protein localises to the secreted. It is found in the nematocyst. In terms of biological role, neurotoxin that paralyzes freshwater crabs at high concentration. This Heteractis aurora (Banded sea anemone) protein is U-stichotoxin-Hau2a.